The chain runs to 183 residues: Ribosome rescue factor SmrB (183 aa).

The 76-residue stretch at 98 to 173 (LDLHGLTQLQ…GDAALLVLIE (76 aa)) folds into the Smr domain.

Belongs to the SmrB family. In terms of assembly, associates with collided ribosomes, but not with correctly translating polysomes.

Functionally, acts as a ribosome collision sensor. Detects stalled/collided disomes (pairs of ribosomes where the leading ribosome is stalled and a second ribosome has collided with it) and endonucleolytically cleaves mRNA at the 5' boundary of the stalled ribosome. Stalled/collided disomes form a new interface (primarily via the 30S subunits) that binds SmrB. Cleaved mRNA becomes available for tmRNA ligation, leading to ribosomal subunit dissociation and rescue of stalled ribosomes. In Salmonella arizonae (strain ATCC BAA-731 / CDC346-86 / RSK2980), this protein is Ribosome rescue factor SmrB.